The sequence spans 438 residues: Ornithine aminotransferase car2 (438 aa).

An N6-(pyridoxal phosphate)lysine modification is found at K275.

It belongs to the class-III pyridoxal-phosphate-dependent aminotransferase family. Pyridoxal 5'-phosphate serves as cofactor.

It localises to the cytoplasm. The protein resides in the nucleus. The enzyme catalyses a 2-oxocarboxylate + L-ornithine = L-glutamate 5-semialdehyde + an L-alpha-amino acid. It functions in the pathway amino-acid biosynthesis; L-proline biosynthesis; L-glutamate 5-semialdehyde from L-ornithine: step 1/1. The polypeptide is Ornithine aminotransferase car2 (car2) (Schizosaccharomyces pombe (strain 972 / ATCC 24843) (Fission yeast)).